The following is a 263-amino-acid chain: Endolytic peptidoglycan transglycosylase RlpA (263 aa).

An N-terminal signal peptide occupies residues 1–16 (MNRIYLYLLIVLILAG). Cysteine 17 carries N-palmitoyl cysteine lipidation. Cysteine 17 is lipidated: S-diacylglycerol cysteine. Positions 182–257 (KNNALEYVIQ…AGYDSAFIKT (76 aa)) constitute an SPOR domain.

This sequence belongs to the RlpA family.

Its subcellular location is the cell membrane. Functionally, lytic transglycosylase with a strong preference for naked glycan strands that lack stem peptides. The polypeptide is Endolytic peptidoglycan transglycosylase RlpA (Vibrio cholerae serotype O1 (strain ATCC 39315 / El Tor Inaba N16961)).